The following is a 785-amino-acid chain: Probable ATP-dependent RNA helicase ddx17 (785 aa).

Low complexity-rich tracts occupy residues 1–11, 18–37, 49–95, and 105–177; these read MSYNSSNSGSG, SGNS…GNRS, SYNR…YGPS, and GSSS…NGYS. The tract at residues 1-233 is disordered; it reads MSYNSSNSGS…TPSTSYNGGS (233 aa). Residues 178–191 are compositionally biased toward polar residues; the sequence is KPTSNYSYSNGYTG. The segment covering 192-233 has biased composition (low complexity); the sequence is PTTNYSSYSNGYSTPPTSTSTSSSSTTTTTTTTPSTSYNGGS. The short motif at 384–412 is the Q motif element; sequence MQFTQAPFPGYLMKEIIGAGFPNPTPIQS. The Helicase ATP-binding domain occupies 415–590; sequence WPIALKGRDI…HDFLTDHIQV (176 aa). 428–435 serves as a coordination point for ATP; the sequence is AKTGSGKT. The DEAD box signature appears at 538–541; sequence DEAD. The Helicase C-terminal domain maps to 602-763; the sequence is NVRQIVEVCQ…KIPIELSNLS (162 aa). Residues 764 to 774 show a composition bias toward polar residues; it reads VTPSTSSNTKK. Positions 764–785 are disordered; the sequence is VTPSTSSNTKKFSPYPTYSKRY.

Belongs to the DEAD box helicase family. DDX5/DBP2 subfamily.

It is found in the cytoplasm. Its subcellular location is the nucleus. It carries out the reaction ATP + H2O = ADP + phosphate + H(+). Its function is as follows. Probable ATP-dependent RNA helicase which may be involved nonsense-mediated mRNA decay and ribosome biogenesis through rRNA processing. This chain is Probable ATP-dependent RNA helicase ddx17 (ddx17), found in Dictyostelium discoideum (Social amoeba).